Here is a 345-residue protein sequence, read N- to C-terminus: tRNA pseudouridine synthase B (345 aa).

Asp39 serves as the catalytic Nucleophile.

It belongs to the pseudouridine synthase TruB family. Type 1 subfamily.

The catalysed reaction is uridine(55) in tRNA = pseudouridine(55) in tRNA. In terms of biological role, responsible for synthesis of pseudouridine from uracil-55 in the psi GC loop of transfer RNAs. The sequence is that of tRNA pseudouridine synthase B from Rickettsia rickettsii (strain Iowa).